The following is a 127-amino-acid chain: Protein yippee-like 4 (127 aa).

Positions 27 to 124 constitute a Yippee domain; it reads RTYSCVHCRA…IEMSHMVKDN (98 aa). Residues C31, C34, C87, and C90 each contribute to the Zn(2+) site. 2 positions are modified to phosphothreonine: T92 and T93. Y98 carries the post-translational modification Phosphotyrosine.

It belongs to the yippee family. As to expression, detected in brain, spleen and testis.

It is found in the nucleus. It localises to the nucleolus. This Mus musculus (Mouse) protein is Protein yippee-like 4 (Ypel4).